The primary structure comprises 324 residues: Zinc transporter ZIP1 (324 aa).

Over 1–30 the chain is Extracellular; the sequence is MGPWGEPELLVWRPEAVASEPSVPVGLEVK. Residues 31–51 traverse the membrane as a helical segment; it reads LGALVLLLLLTLICSLVPVCV. At 52–68 the chain is on the cytoplasmic side; the sequence is LRRSGANHEASASGQKA. Residues 69 to 89 form a helical membrane-spanning segment; the sequence is LSLVSCFAGGVFLATCLLDLL. Residues 90–104 are Extracellular-facing; it reads PDYLAAIDEALEALH. The helical transmembrane segment at 105–125 threads the bilayer; that stretch reads VTLQFPLQEFILAMGFFLVLV. Residues 126–179 lie on the Cytoplasmic side of the membrane; it reads MEQITLAYKEQTSPPHPEETRALLGTVNGGPQHWHDGPGIPQAGGTPAAPSALR. Residues 180–200 traverse the membrane as a helical segment; the sequence is ACVLVFSLALHSVFEGLAVGL. Residues 201–206 lie on the Extracellular side of the membrane; sequence QRDRAR. The chain crosses the membrane as a helical span at residues 207 to 227; it reads AMELCLALLLHKGILAVSLSL. The Cytoplasmic portion of the chain corresponds to 228–237; that stretch reads RLLQSHLRVQ. Residues 238–258 traverse the membrane as a helical segment; sequence VVAGCGILFSCMTPLGIGLGA. Residues 259-272 are Extracellular-facing; sequence ALAESAGPLHQLAQ. Residues 273 to 293 traverse the membrane as a helical segment; that stretch reads SVLEGMAAGTFLYITFLEILP. At 294–303 the chain is on the cytoplasmic side; that stretch reads QELATSEQRI. Residues 304 to 324 form a helical membrane-spanning segment; the sequence is LKVILLLAGFALLTGLLFVQI.

It belongs to the ZIP transporter (TC 2.A.5) family. In terms of tissue distribution, ubiquitous, except in the pancreas. Highest levels seen in kidney, salivary gland and placenta.

It localises to the cell membrane. The protein resides in the endoplasmic reticulum membrane. It catalyses the reaction Zn(2+)(in) = Zn(2+)(out). Functionally, transporter for the divalent cation Zn(2+). Mediates the influx of Zn(2+) into cells from extracellular space. The sequence is that of Zinc transporter ZIP1 (Slc39a1) from Mus musculus (Mouse).